A 685-amino-acid polypeptide reads, in one-letter code: ABC transporter G family member 26 (685 aa).

The 265-residue stretch at 65-329 (LKFEDVEYKV…FSSLRILPEI (265 aa)) folds into the ABC transporter domain. 124–131 (GPSGSGKT) contacts ATP. Residues 414–623 (DQFLILSRRT…GFRLLLKVQY (210 aa)) form the ABC transmembrane type-2 domain. 6 helical membrane passes run 432-452 (FDKL…LLWW), 468-488 (LMFY…VYVF), 518-538 (MVAH…MAEF), 542-562 (IPCF…SQGA), 576-596 (AGMI…YYVQ), and 648-668 (TINL…AFGY).

The protein belongs to the ABC transporter superfamily. ABCG family. Eye pigment precursor importer (TC 3.A.1.204) subfamily. In terms of assembly, homo- or heterodimer. As to expression, mostly expressed in flowers, especially in tapetum within anthers.

Its subcellular location is the cell membrane. The protein resides in the endoplasmic reticulum membrane. Functionally, mediates the transport of sporopollenin precursors (e.g. polyketides) across the tapetum plasma membrane into the anther locule for polymerization on developing microspore walls, thus being required for male fertility and pollen exine formation and patterning prior to tapetum programmed cell death. The polypeptide is ABC transporter G family member 26 (Arabidopsis thaliana (Mouse-ear cress)).